The chain runs to 557 residues: Potassium-transporting ATPase potassium-binding subunit (557 aa).

The next 12 helical transmembrane spans lie at 5–25, 63–83, 132–152, 170–190, 253–273, 283–303, 329–349, 356–376, 379–399, 416–436, 484–504, and 526–546; these read GFLLIATFLLVLMVLARPLGS, LCAILGLNMLGLAVLFFMLLG, GLTVQNFLSAASGIAVIFALI, LLRITLWVLVPVALLIALFFI, FVQMLAIFLIPTALCFAFGEV, LLWAMSVIFVICVGVVMWAEV, VLVSSLFAVVTTAASCGAVIA, ALGGMVPMWLMQIGEVVFGGV, GLYGMMLFVLLAVFIAGLMIG, LTALAILVTPTLVLMGAALAM, LLAFCMFVGRFGVIIPVMAIA, and LFVGLLIGTVLLVGALTFIPA.

It belongs to the KdpA family. In terms of assembly, the system is composed of three essential subunits: KdpA, KdpB and KdpC.

The protein localises to the cell inner membrane. Functionally, part of the high-affinity ATP-driven potassium transport (or Kdp) system, which catalyzes the hydrolysis of ATP coupled with the electrogenic transport of potassium into the cytoplasm. This subunit binds the periplasmic potassium ions and delivers the ions to the membrane domain of KdpB through an intramembrane tunnel. The chain is Potassium-transporting ATPase potassium-binding subunit from Escherichia coli (strain K12 / MC4100 / BW2952).